Here is a 430-residue protein sequence, read N- to C-terminus: Adenylosuccinate synthetase (430 aa).

Residues 13 to 19 (GDEGKGK) and 41 to 43 (GHT) each bind GTP. Aspartate 14 (proton acceptor) is an active-site residue. Residues aspartate 14 and glycine 41 each coordinate Mg(2+). Residues 14-17 (DEGK), 39-42 (NAGH), threonine 130, arginine 144, glutamine 225, threonine 240, and arginine 304 each bind IMP. The Proton donor role is filled by histidine 42. Residue 300 to 306 (ASTGRPR) participates in substrate binding. Residues arginine 306, 332 to 334 (KLD), and 414 to 416 (STG) each bind GTP.

Belongs to the adenylosuccinate synthetase family. As to quaternary structure, homodimer. Mg(2+) is required as a cofactor.

It localises to the cytoplasm. It catalyses the reaction IMP + L-aspartate + GTP = N(6)-(1,2-dicarboxyethyl)-AMP + GDP + phosphate + 2 H(+). It functions in the pathway purine metabolism; AMP biosynthesis via de novo pathway; AMP from IMP: step 1/2. Its function is as follows. Plays an important role in the de novo pathway of purine nucleotide biosynthesis. Catalyzes the first committed step in the biosynthesis of AMP from IMP. The chain is Adenylosuccinate synthetase from Xylella fastidiosa (strain M23).